A 115-amino-acid chain; its full sequence is NADH-ubiquinone oxidoreductase chain 3 (115 aa).

A run of 3 helical transmembrane segments spans residues 3-23 (LLII…IAFW), 55-75 (FFLV…LLPL), and 86-106 (TMMA…SYEW).

This sequence belongs to the complex I subunit 3 family. Core subunit of respiratory chain NADH dehydrogenase (Complex I) which is composed of 45 different subunits. Interacts with TMEM186. Interacts with TMEM242.

It localises to the mitochondrion inner membrane. It carries out the reaction a ubiquinone + NADH + 5 H(+)(in) = a ubiquinol + NAD(+) + 4 H(+)(out). In terms of biological role, core subunit of the mitochondrial membrane respiratory chain NADH dehydrogenase (Complex I) which catalyzes electron transfer from NADH through the respiratory chain, using ubiquinone as an electron acceptor. Essential for the catalytic activity of complex I. The polypeptide is NADH-ubiquinone oxidoreductase chain 3 (Rattus norvegicus (Rat)).